We begin with the raw amino-acid sequence, 428 residues long: UPF0229 protein YeaH (428 aa).

Over residues 77–90 the composition is skewed to basic and acidic residues; the sequence is PGNDHFIQNDRIER. The disordered stretch occupies residues 77 to 111; the sequence is PGNDHFIQNDRIERPQSGGGGGSGSGQGQASQDGE. The span at 93–103 shows a compositional bias: gly residues; it reads SGGGGGSGSGQ.

The protein belongs to the UPF0229 family.

The chain is UPF0229 protein YeaH from Salmonella typhi.